Here is a 266-residue protein sequence, read N- to C-terminus: 22 kDa alpha-zein 14 (266 aa).

The first 21 residues, 1–21, serve as a signal peptide directing secretion; it reads MATKILSLLALLALFASATNA.

It belongs to the zein family.

Functionally, zeins are major seed storage proteins. The chain is 22 kDa alpha-zein 14 from Zea mays (Maize).